A 164-amino-acid chain; its full sequence is Pleckstrin homology domain-containing family J member 1 (164 aa).

Residues 15-108 form the PH domain; it reads PAEMAAELGM…WMEALQRASY (94 aa).

The protein is Pleckstrin homology domain-containing family J member 1 (Plekhj1) of Mus musculus (Mouse).